The primary structure comprises 119 residues: MARVTVEDCVEKVPNRFALVLLSAHRARGISAGAALMVDRDNDKNPVVALREIADDVIDHEGLKEHLISTLQRVDEHTEAEEEAETLALLADPSHMQMSELELVRALQSDRDGGQEERY.

Belongs to the RNA polymerase subunit omega family. In terms of assembly, the RNAP catalytic core consists of 2 alpha, 1 beta, 1 beta' and 1 omega subunit. When a sigma factor is associated with the core the holoenzyme is formed, which can initiate transcription.

It catalyses the reaction RNA(n) + a ribonucleoside 5'-triphosphate = RNA(n+1) + diphosphate. Promotes RNA polymerase assembly. Latches the N- and C-terminal regions of the beta' subunit thereby facilitating its interaction with the beta and alpha subunits. In Caulobacter vibrioides (strain ATCC 19089 / CIP 103742 / CB 15) (Caulobacter crescentus), this protein is DNA-directed RNA polymerase subunit omega (rpoZ).